The following is a 410-amino-acid chain: Arginine deiminase (410 aa).

C400 (amidino-cysteine intermediate) is an active-site residue.

This sequence belongs to the arginine deiminase family.

Its subcellular location is the cytoplasm. The enzyme catalyses L-arginine + H2O = L-citrulline + NH4(+). The protein operates within amino-acid degradation; L-arginine degradation via ADI pathway; carbamoyl phosphate from L-arginine: step 1/2. The sequence is that of Arginine deiminase from Streptococcus agalactiae serotype Ia (strain ATCC 27591 / A909 / CDC SS700).